The following is a 423-amino-acid chain: Glycine amidinotransferase, mitochondrial (423 aa).

The N-terminal 43 residues, 1-43, are a transit peptide targeting the mitochondrion; sequence MLRVRCLRGGSRGAEALHYIGSRLGRTVTGWVQRTFQSTQAAT. Phosphoserine is present on residues Ser46 and Ser49. Residue Asp170 coordinates arginine. Active-site residues include Asp254 and His303. Positions 305, 322, 354, and 355 each coordinate arginine. Residue Lys385 is modified to N6-acetyllysine. The Amidino-cysteine intermediate role is filled by Cys407.

The protein belongs to the amidinotransferase family. Homodimer.

It localises to the mitochondrion inner membrane. The enzyme catalyses L-arginine + glycine = guanidinoacetate + L-ornithine. It carries out the reaction 4-aminobutanoate + L-arginine = 4-guanidinobutanoate + L-ornithine. The catalysed reaction is beta-alanine + L-arginine = 3-guanidinopropanoate + L-ornithine. It catalyses the reaction taurine + L-arginine = taurocyamine + L-ornithine. It participates in amine and polyamine biosynthesis; creatine biosynthesis; creatine from L-arginine and glycine: step 1/2. Transamidinase that catalyzes the transfer of the amidino group of L-arginine onto the amino moiety of acceptor metabolites such as glycine, beta-alanine, gamma-aminobutyric acid (GABA) and taurine yielding the corresponding guanidine derivatives. Catalyzes the rate-limiting step of creatine biosynthesis, namely the transfer of the amidino group from L-arginine to glycine to generate guanidinoacetate, which is then methylated by GAMT to form creatine. Provides creatine as a source for ATP generation in tissues with high energy demands, in particular skeletal muscle, heart and brain. In Bos taurus (Bovine), this protein is Glycine amidinotransferase, mitochondrial (GATM).